The chain runs to 433 residues: Enolase (433 aa).

The disordered stretch occupies residues 37–59 (RAAVPSGASTGEHEAVELRDGDK). A compositionally biased stretch (basic and acidic residues) spans 47 to 59 (GEHEAVELRDGDK). Residue Gln166 coordinates (2R)-2-phosphoglycerate. Catalysis depends on Glu208, which acts as the Proton donor. Positions 245, 291, and 318 each coordinate Mg(2+). Residues Lys343, Arg372, Ser373, and Lys394 each contribute to the (2R)-2-phosphoglycerate site. Catalysis depends on Lys343, which acts as the Proton acceptor.

This sequence belongs to the enolase family. Mg(2+) serves as cofactor.

It localises to the cytoplasm. The protein resides in the secreted. Its subcellular location is the cell surface. The enzyme catalyses (2R)-2-phosphoglycerate = phosphoenolpyruvate + H2O. It participates in carbohydrate degradation; glycolysis; pyruvate from D-glyceraldehyde 3-phosphate: step 4/5. Its function is as follows. Catalyzes the reversible conversion of 2-phosphoglycerate (2-PG) into phosphoenolpyruvate (PEP). It is essential for the degradation of carbohydrates via glycolysis. This chain is Enolase, found in Leptospira biflexa serovar Patoc (strain Patoc 1 / Ames).